A 204-amino-acid polypeptide reads, in one-letter code: Ancillary SecYEG translocon subunit (204 aa).

Over 1-23 (MAYTIEEEQELTAIKAWWNENYK) the chain is Cytoplasmic. A helical transmembrane segment spans residues 24-44 (FIIVCFVIAFGGVFGWNYWQS). At 45–204 (HQIQKMHKAS…QLIQVRLNNL (160 aa)) the chain is on the periplasmic side.

The protein belongs to the YfgM family. As to quaternary structure, interacts with the SecYEG translocon. Forms a complex with PpiD.

It is found in the cell inner membrane. Its function is as follows. May mediate protein transfer from the SecYEG translocon to the periplasmic chaperone network via its periplasmic C-terminal region. This is Ancillary SecYEG translocon subunit (1057) from Aggregatibacter actinomycetemcomitans (Actinobacillus actinomycetemcomitans).